A 475-amino-acid chain; its full sequence is UDP-N-acetylmuramoylalanine--D-glutamate ligase (475 aa).

G130–T136 contributes to the ATP binding site.

It belongs to the MurCDEF family.

It is found in the cytoplasm. The catalysed reaction is UDP-N-acetyl-alpha-D-muramoyl-L-alanine + D-glutamate + ATP = UDP-N-acetyl-alpha-D-muramoyl-L-alanyl-D-glutamate + ADP + phosphate + H(+). It functions in the pathway cell wall biogenesis; peptidoglycan biosynthesis. Cell wall formation. Catalyzes the addition of glutamate to the nucleotide precursor UDP-N-acetylmuramoyl-L-alanine (UMA). The chain is UDP-N-acetylmuramoylalanine--D-glutamate ligase from Corynebacterium diphtheriae (strain ATCC 700971 / NCTC 13129 / Biotype gravis).